The sequence spans 467 residues: ATP synthase subunit beta (467 aa).

150–157 (GGAGVGKT) is an ATP binding site.

This sequence belongs to the ATPase alpha/beta chains family. As to quaternary structure, F-type ATPases have 2 components, CF(1) - the catalytic core - and CF(0) - the membrane proton channel. CF(1) has five subunits: alpha(3), beta(3), gamma(1), delta(1), epsilon(1). CF(0) has three main subunits: a(1), b(2) and c(9-12). The alpha and beta chains form an alternating ring which encloses part of the gamma chain. CF(1) is attached to CF(0) by a central stalk formed by the gamma and epsilon chains, while a peripheral stalk is formed by the delta and b chains.

The protein resides in the cell inner membrane. The catalysed reaction is ATP + H2O + 4 H(+)(in) = ADP + phosphate + 5 H(+)(out). Produces ATP from ADP in the presence of a proton gradient across the membrane. The catalytic sites are hosted primarily by the beta subunits. This chain is ATP synthase subunit beta, found in Vibrio cholerae serotype O1 (strain ATCC 39541 / Classical Ogawa 395 / O395).